The sequence spans 1465 residues: DNA polymerase alpha catalytic subunit (1465 aa).

Disordered regions lie at residues 20–39 and 105–135; these read GSFA…GRQE and LEDD…PSVT. Residues 26–35 show a composition bias toward basic residues; sequence RARREKKSKK. Thr-180 is subject to Phosphothreonine. Phosphoserine is present on residues Ser-192 and Ser-215. The residue at position 230 (Lys-230) is an N6-acetyllysine. Residues 261-297 form a disordered region; it reads DESMDTEKVDEKPVTAKTWDQETEPVERVEHEADPER. Composition is skewed to basic and acidic residues over residues 265–274 and 285–297; these read DTEKVDEKPV and PVER…DPER. The segment at 654–719 is DNA-binding; that stretch reads RINECKVPYW…YHLSELVQQI (66 aa). Lys-974 is modified (N6-succinyllysine). Positions 1249-1380 are DNA-binding; the sequence is QFRVHQYHKD…NGPLCPVCMK (132 aa). 8 residues coordinate Zn(2+): Cys-1287, Cys-1290, Cys-1314, Cys-1319, Cys-1352, Cys-1357, Cys-1375, and Cys-1378. Residues 1287–1317 form a CysA-type zinc finger; that stretch reads CPSCGTENIYDNVFEGSGLDMEPSLYRCSNV. The CysB motif signature appears at 1352 to 1378; that stretch reads CEEPTCCSRLRRLPLHFSRNGPLCPVC.

The protein belongs to the DNA polymerase type-B family. As to quaternary structure, component of the alpha DNA polymerase complex (also known as the alpha DNA polymerase-primase complex) consisting of four subunits: the catalytic subunit POLA1, the regulatory subunit POLA2, and the primase complex subunits PRIM1 and PRIM2 respectively. Within the complex, POLA1 directly interacts with PRIM2. Interacts with PARP1; this interaction functions as part of the control of replication fork progression. Interacts with MCM10 and WDHD1; these interactions recruit the polymerase alpha complex to the pre-replicative complex bound to DNA. Interacts with RPA1; this interaction stabilizes the replicative complex and reduces the misincorporation rate of DNA polymerase alpha by acting as a fidelity clamp. As to expression, expressed in those zones containing proliferating cells in the developing embryonic neocortex, as well as in the lateral and medial ganglionic eminences. After birth, expressed in cells that remain proliferating in the ventricular and subventricular zone of the striatum.

It is found in the nucleus. The protein resides in the cytoplasm. The protein localises to the cytosol. The enzyme catalyses DNA(n) + a 2'-deoxyribonucleoside 5'-triphosphate = DNA(n+1) + diphosphate. Its function is as follows. Catalytic subunit of the DNA polymerase alpha complex (also known as the alpha DNA polymerase-primase complex) which plays an essential role in the initiation of DNA synthesis. During the S phase of the cell cycle, the DNA polymerase alpha complex (composed of a catalytic subunit POLA1, a regulatory subunit POLA2 and two primase subunits PRIM1 and PRIM2) is recruited to DNA at the replicative forks via direct interactions with MCM10 and WDHD1. The primase subunit of the polymerase alpha complex initiates DNA synthesis by oligomerising short RNA primers on both leading and lagging strands. These primers are initially extended by the polymerase alpha catalytic subunit and subsequently transferred to polymerase delta and polymerase epsilon for processive synthesis on the lagging and leading strand, respectively. The reason this transfer occurs is because the polymerase alpha has limited processivity and lacks intrinsic 3' exonuclease activity for proofreading error, and therefore is not well suited for replicating long complexes. In the cytosol, responsible for a substantial proportion of the physiological concentration of cytosolic RNA:DNA hybrids, which are necessary to prevent spontaneous activation of type I interferon responses. This chain is DNA polymerase alpha catalytic subunit (Pola1), found in Mus musculus (Mouse).